The primary structure comprises 424 residues: MKFDVIIIGGGLAGLACGIRLAEQGKYCAIVSAGQNALHFSSGSLDLLAKLPDGRAVSQPLSALSALAELAPEHPYSKMRNITQLDELVQEAEALLRRCGLDIVGSSAENHLRLTPLGSCRPTWLSLADIPVAPLNGPLPWQRVAVIGIEGFLDFQPQMVASALQDQGIDATADYLHLPALDRLRDNPSEFRAVNIARILDLPENRQPLADELSRLSSTAEMILLPACIGLDKSAPLDALRAVVGKPIQLLPTLPPSLLGMRLHQALRHRFQQLGGLVMPGDAVLRAELVDNRITGLYSRNHGDIPLRAAQMVLASGSFFSNGLVATFDKVYEPILDLDILSLPHRADWSHSNLFAPQPYLQFGVNTDNHLRPLRGGVALENLHAIGAVLGGYDPLQQGCGAGVSLTSAVFVAEQIISEMAVTL.

This sequence belongs to the anaerobic G-3-P dehydrogenase subunit B family. Composed of a catalytic GlpA/B dimer and of membrane bound GlpC. FMN serves as cofactor.

It catalyses the reaction a quinone + sn-glycerol 3-phosphate = dihydroxyacetone phosphate + a quinol. It participates in polyol metabolism; glycerol degradation via glycerol kinase pathway; glycerone phosphate from sn-glycerol 3-phosphate (anaerobic route): step 1/1. In terms of biological role, conversion of glycerol 3-phosphate to dihydroxyacetone. Uses fumarate or nitrate as electron acceptor. The polypeptide is Anaerobic glycerol-3-phosphate dehydrogenase subunit B (Yersinia pseudotuberculosis serotype I (strain IP32953)).